Here is an 80-residue protein sequence, read N- to C-terminus: Protein pegasus (80 aa).

A signal peptide spans 1-22 (MKLSAVLLAIALLALSLVQCLG). The 57-residue stretch at 24-80 (PDPSTKCVMECDTQEYRSICAADDKGSTKTYRNLCVMKTENCLQNANFQKISDKECP) folds into the Kazal-like domain. Cystine bridges form between C30/C65, C34/C58, and C43/C79.

As to quaternary structure, interacts with wg; the interaction facilitates short-range diffusion of wg. Strongly expressed in the developing fly wing but is excluded from the presumptive wing margin.

The protein resides in the secreted. Its function is as follows. Increases short-range diffusion of the wingless/wg protein, enhancing its signaling and expression of target genes required for wing margin morphogenesis. May act as a serine protease inhibitor since it possess the Kazal serine protease inhibitor signature. This is Protein pegasus from Drosophila melanogaster (Fruit fly).